The sequence spans 96 residues: Large ribosomal subunit protein eL14 (96 aa).

It belongs to the eukaryotic ribosomal protein eL14 family.

This Desulfurococcus amylolyticus (strain DSM 18924 / JCM 16383 / VKM B-2413 / 1221n) (Desulfurococcus kamchatkensis) protein is Large ribosomal subunit protein eL14.